The chain runs to 178 residues: ATP-dependent protease subunit HslV (178 aa).

Threonine 5 is an active-site residue. Residues glycine 161, cysteine 164, and threonine 167 each contribute to the Na(+) site.

This sequence belongs to the peptidase T1B family. HslV subfamily. As to quaternary structure, a double ring-shaped homohexamer of HslV is capped on each side by a ring-shaped HslU homohexamer. The assembly of the HslU/HslV complex is dependent on binding of ATP.

The protein resides in the cytoplasm. It carries out the reaction ATP-dependent cleavage of peptide bonds with broad specificity.. Allosterically activated by HslU binding. Functionally, protease subunit of a proteasome-like degradation complex believed to be a general protein degrading machinery. In Nitratiruptor sp. (strain SB155-2), this protein is ATP-dependent protease subunit HslV.